Here is a 594-residue protein sequence, read N- to C-terminus: Putative lipase ATG15-1 (594 aa).

The Cytoplasmic portion of the chain corresponds to 1-12 (MRRRPLCTSASR). A helical; Signal-anchor for type II membrane protein membrane pass occupies residues 13-33 (VTASLLLSFLAVSSAAELPIL). Over 34 to 594 (PAPPISPQPH…ANHFVYVLHA (561 aa)) the chain is Lumenal. 5 N-linked (GlcNAc...) asparagine glycosylation sites follow: Asn-144, Asn-179, Asn-201, Asn-259, and Asn-283. Ser-299 serves as the catalytic Charge relay system. N-linked (GlcNAc...) asparagine glycosylation is found at Asn-432 and Asn-445. The segment covering 447–469 (TETTTTSTSKPTSTSKSSKSNTR) has biased composition (low complexity). 2 disordered regions span residues 447 to 473 (TETT…TRTE) and 489 to 509 (TGTQ…TSTC). Residues Asn-576 and Asn-582 are each glycosylated (N-linked (GlcNAc...) asparagine).

The protein belongs to the AB hydrolase superfamily. Lipase family. As to quaternary structure, binds to both phosphatidylinositol (PI) and phosphatidylinositol 3,5-bisphosphate (PIP2).

It is found in the endosome. It localises to the multivesicular body membrane. Its subcellular location is the prevacuolar compartment membrane. The enzyme catalyses a triacylglycerol + H2O = a diacylglycerol + a fatty acid + H(+). In terms of biological role, lipase which is essential for lysis of subvacuolar cytoplasm to vacuole targeted bodies and intravacuolar autophagic bodies. Involved in the lysis of intravacuolar multivesicular body (MVB) vesicles. The intravacuolar membrane disintegration by ATG15 is critical to life span extension. The chain is Putative lipase ATG15-1 (ATG15-1) from Phaeosphaeria nodorum (strain SN15 / ATCC MYA-4574 / FGSC 10173) (Glume blotch fungus).